The chain runs to 539 residues: MATGSTELLIGWCIFGVLLLAILAFCWVYVRKYQSHQESEVISTITAISSLAIALITSALLPVDIFLVSFMKNHNGTFKDWAESNTTRLQIENTVLIGYYTLYSIILFCVFLWIPFVYFYYEEKDDTDGSQCSQIANAFKYTSGFILVCSCLLLIGAFAPLDIHTNKNSTDLDKIKLLFLELGSSNGLAALSFSISSLTLIGMLAAITYTAYGMSALPLNLIKGTRNAHYERLENSEDIEEVEQQVERIMSKCKDGRPLSSKDRQALYKLKEKLRTLKRRDRHLEYHENNCWTKCCIVIRPFKIIWGILFILVALLFIVSLFLSNLDKALHSAGIDSGFIIFGTNLTNPLNMLLPVLQTVFPLDYIFITIITMYFIFTSMAGIRNMGIWFFWIRLYKIRRRRTRPQALLFLCMILLLIVLHTSYMIYSLAPQYVMYGSQKYLWENNSTQETAIGNSSASVLKDCDASAPEDQCTVTRTYLFLHKFWFFSSIYYFGNWAFIVVFVIGLIVSCCKGKKSVIEGEVEDDDSDLSDDEEHPYA.

At 1–7 (MATGSTE) the chain is on the extracellular side. Residues 8–28 (LLIGWCIFGVLLLAILAFCWV) traverse the membrane as a helical segment. At 29 to 47 (YVRKYQSHQESEVISTITA) the chain is on the cytoplasmic side. Residues 48-68 (ISSLAIALITSALLPVDIFLV) traverse the membrane as a helical segment. The Extracellular segment spans residues 69 to 98 (SFMKNHNGTFKDWAESNTTRLQIENTVLIG). N-linked (GlcNAc...) asparagine glycans are attached at residues asparagine 75 and asparagine 85. Residues 99–119 (YYTLYSIILFCVFLWIPFVYF) traverse the membrane as a helical segment. The Cytoplasmic segment spans residues 120–142 (YYEEKDDTDGSQCSQIANAFKYT). The helical transmembrane segment at 143-163 (SGFILVCSCLLLIGAFAPLDI) threads the bilayer. Residues 164–186 (HTNKNSTDLDKIKLLFLELGSSN) are Extracellular-facing. An N-linked (GlcNAc...) asparagine glycan is attached at asparagine 168. A helical transmembrane segment spans residues 187–207 (GLAALSFSISSLTLIGMLAAI). Residues 208–303 (TYTAYGMSAL…KCCIVIRPFK (96 aa)) are Cytoplasmic-facing. Residues 304 to 324 (IIWGILFILVALLFIVSLFLS) traverse the membrane as a helical segment. The Extracellular portion of the chain corresponds to 325-362 (NLDKALHSAGIDSGFIIFGTNLTNPLNMLLPVLQTVFP). Residue asparagine 345 is glycosylated (N-linked (GlcNAc...) asparagine). A helical membrane pass occupies residues 363–383 (LDYIFITIITMYFIFTSMAGI). Residues 384 to 406 (RNMGIWFFWIRLYKIRRRRTRPQ) lie on the Cytoplasmic side of the membrane. The helical transmembrane segment at 407-427 (ALLFLCMILLLIVLHTSYMIY) threads the bilayer. At 428-484 (SLAPQYVMYGSQKYLWENNSTQETAIGNSSASVLKDCDASAPEDQCTVTRTYLFLHK) the chain is on the extracellular side. Residues asparagine 445, asparagine 446, and asparagine 455 are each glycosylated (N-linked (GlcNAc...) asparagine). A helical transmembrane segment spans residues 485–505 (FWFFSSIYYFGNWAFIVVFVI). The Cytoplasmic portion of the chain corresponds to 506-539 (GLIVSCCKGKKSVIEGEVEDDDSDLSDDEEHPYA).

It belongs to the LIMR family. LMBRD1 subfamily.

It localises to the endoplasmic reticulum membrane. It is found in the lysosome membrane. The protein localises to the cell membrane. Its function is as follows. Lysosomal membrane chaperone required to export cobalamin (vitamin B12) from the lysosome to the cytosol, allowing its conversion to cofactors. Targets ABCD4 transporter from the endoplasmic reticulum to the lysosome. Then forms a complex with lysosomal ABCD4 and cytoplasmic MMACHC to transport cobalamin across the lysosomal membrane. May play a role in mediating and regulating the internalization of the insulin receptor. The protein is Lysosomal cobalamin transport escort protein LMBD1 (lmbrd1) of Xenopus tropicalis (Western clawed frog).